A 271-amino-acid chain; its full sequence is Aquaporin-11 (271 aa).

The Cytoplasmic segment spans residues 1 to 14 (MSALLGLPPEVQDT). The chain crosses the membrane as a helical span at residues 15 to 35 (CISLGLMLLVVLFMGLARVIA). Residues 36 to 41 (RQQLHR) lie on the Lumenal side of the membrane. A helical membrane pass occupies residues 42–62 (PMVHAFVLEFLATFQLCYCTH). Over 63–76 (ELQLLSEQDSGHPT) the chain is Cytoplasmic. The chain crosses the membrane as a helical span at residues 77–97 (WTLTLIYFFSLVHGLTLVGTA). Residues 98 to 166 (SNPCGVMMQM…NPINTDISKA (69 aa)) lie on the Lumenal side of the membrane. Residues 99–101 (NPC) carry the NPC motif. The helical transmembrane segment at 167-187 (IIIEAICSFIFHSALLHFQEV) threads the bilayer. The Cytoplasmic portion of the chain corresponds to 188–194 (RTKLRIH). Residues 195-215 (VLAALITFLAYAGGSLTGALF) traverse the membrane as a helical segment. The short motif at 216–218 (NPA) is the NPA element. The Lumenal portion of the chain corresponds to 216–234 (NPALALSLHFPCFDESFYK). The helical transmembrane segment at 235–255 (FFVVYWVAPSLGVLLMILMFS) threads the bilayer. Residues 256–271 (FFLPWLHNNQLSNKKE) lie on the Cytoplasmic side of the membrane.

Belongs to the MIP/aquaporin (TC 1.A.8) family. AQP11/AQP12 subfamily. In terms of assembly, homodimer; disulfide-linked. Homotetramer. Can also form homomultimer. Post-translationally, not glycosylated. In terms of tissue distribution, expressed in retina specifically at retinal Mueller glial cells. Expressed in adult testis, in the elongated spermatids (ES) and in residual bodies inside Sertoli cells.

Its subcellular location is the endoplasmic reticulum membrane. It localises to the cytoplasmic vesicle membrane. The protein resides in the cell membrane. It catalyses the reaction H2O(in) = H2O(out). The catalysed reaction is glycerol(in) = glycerol(out). It carries out the reaction H2O2(out) = H2O2(in). Channel protein that facilitates the transport of water, glycerol and hydrogen peroxide across membrane of cell or organelles guaranteeing intracellular homeostasis in several organes like liver, kidney and brain. In situation of stress, participates in endoplasmic reticulum (ER) homeostasis by regulating redox homeostasis through the transport of hydrogen peroxide across the endoplasmic reticulum membrane thereby regulating the oxidative stress through the NADPH oxidase 2 pathway. Plays a role by maintaining an environment suitable for translation or protein foldings in the ER lumen namely by participating in the PKD1 glycosylation processing resulting in regulation of PKD1 membrane trafficking thereby preventing the accumulation of unfolding protein in ER. Plays a role in the proximal tubule function by regulating its endosomal acidification. May play a role in postnatal kidney development. This Rattus norvegicus (Rat) protein is Aquaporin-11.